The primary structure comprises 237 residues: Phosphoribosylaminoimidazole-succinocarboxamide synthase (237 aa).

The protein belongs to the SAICAR synthetase family.

The catalysed reaction is 5-amino-1-(5-phospho-D-ribosyl)imidazole-4-carboxylate + L-aspartate + ATP = (2S)-2-[5-amino-1-(5-phospho-beta-D-ribosyl)imidazole-4-carboxamido]succinate + ADP + phosphate + 2 H(+). Its pathway is purine metabolism; IMP biosynthesis via de novo pathway; 5-amino-1-(5-phospho-D-ribosyl)imidazole-4-carboxamide from 5-amino-1-(5-phospho-D-ribosyl)imidazole-4-carboxylate: step 1/2. This is Phosphoribosylaminoimidazole-succinocarboxamide synthase from Cronobacter sakazakii (strain ATCC BAA-894) (Enterobacter sakazakii).